The primary structure comprises 288 residues: Acetyl-coenzyme A carboxylase carboxyl transferase subunit beta (288 aa).

The CoA carboxyltransferase N-terminal domain occupies 34-288 (LFAKCPACKH…HLVAFHGGGQ (255 aa)). Cys-38, Cys-41, Cys-56, and Cys-59 together coordinate Zn(2+). The segment at 38–59 (CPACKHMIYKKDLGLAKICPTC) adopts a C4-type zinc-finger fold.

It belongs to the AccD/PCCB family. As to quaternary structure, acetyl-CoA carboxylase is a heterohexamer composed of biotin carboxyl carrier protein (AccB), biotin carboxylase (AccC) and two subunits each of ACCase subunit alpha (AccA) and ACCase subunit beta (AccD). It depends on Zn(2+) as a cofactor.

It localises to the cytoplasm. It catalyses the reaction N(6)-carboxybiotinyl-L-lysyl-[protein] + acetyl-CoA = N(6)-biotinyl-L-lysyl-[protein] + malonyl-CoA. It participates in lipid metabolism; malonyl-CoA biosynthesis; malonyl-CoA from acetyl-CoA: step 1/1. In terms of biological role, component of the acetyl coenzyme A carboxylase (ACC) complex. Biotin carboxylase (BC) catalyzes the carboxylation of biotin on its carrier protein (BCCP) and then the CO(2) group is transferred by the transcarboxylase to acetyl-CoA to form malonyl-CoA. This chain is Acetyl-coenzyme A carboxylase carboxyl transferase subunit beta, found in Streptococcus pyogenes serotype M4 (strain MGAS10750).